Here is a 71-residue protein sequence, read N- to C-terminus: Cell division protein ZapB (71 aa).

A coiled-coil region spans residues 5–67 (LEVLEQLESK…RALLGKMDQM (63 aa)).

It belongs to the ZapB family. As to quaternary structure, homodimer. The ends of the coiled-coil dimer bind to each other, forming polymers. Interacts with FtsZ.

It is found in the cytoplasm. Functionally, non-essential, abundant cell division factor that is required for proper Z-ring formation. It is recruited early to the divisome by direct interaction with FtsZ, stimulating Z-ring assembly and thereby promoting cell division earlier in the cell cycle. Its recruitment to the Z-ring requires functional FtsA or ZipA. In Aeromonas hydrophila subsp. hydrophila (strain ATCC 7966 / DSM 30187 / BCRC 13018 / CCUG 14551 / JCM 1027 / KCTC 2358 / NCIMB 9240 / NCTC 8049), this protein is Cell division protein ZapB.